The following is a 122-amino-acid chain: Autophagy-related protein 8e (122 aa).

The Phosphatidylethanolamine amidated glycine moiety is linked to residue Gly118. Positions Ala119–Ile122 are cleaved as a propeptide — removed in mature form.

It belongs to the ATG8 family. Interacts with ATG4. Interacts with SH3P2. Interacts with ATG1A and ATG11. Binds to ATG1A and ATG11 on autophagic vesicles. In terms of processing, the C-terminal 4 residues are removed by ATG4 to expose Gly-118 at the C-terminus. This Gly-118 forms then a thioester bond with the 'Cys-558' of ATG7 (E1-like activating enzyme) before being transferred to the 'Cys-258' of ATG3 (the specific E2 conjugating enzyme), in order to be finally amidated with phosphatidylethanolamine. This lipid modification anchors ATG8 to autophagosomes. As to expression, constitutively expressed.

The protein resides in the cytoplasmic vesicle. The protein localises to the autophagosome membrane. It is found in the vacuole membrane. It localises to the cytoplasm. Its subcellular location is the cytoskeleton. Ubiquitin-like modifier involved in autophagosomes formation. May mediate the delivery of the autophagosomes to the vacuole via the microtubule cytoskeleton. The polypeptide is Autophagy-related protein 8e (ATG8E) (Arabidopsis thaliana (Mouse-ear cress)).